We begin with the raw amino-acid sequence, 244 residues long: S-adenosyl-L-methionine-dependent Diels-Alderase iliD (244 aa).

This sequence belongs to the class I-like SAM-binding methyltransferase superfamily. Erg6/SMT family. Requires S-adenosyl-L-methionine as cofactor.

It carries out the reaction 3-[(2E,4E,8S,10E,12Z)-4,8-dimethyltetradeca-2,4,10,12-tetraenoyl]-4-hydroxy-5-(4-hydroxyphenyl)-1,2-dihydropyridin-2-one = ilicicolin H. The protein operates within mycotoxin biosynthesis. S-adenosyl-l-methionine-dependent Diels-Alderase; part of the gene cluster that mediates the biosynthesis of ilicicolin H, a 4-hydroxy-2-pyridonealkaloid that has potent and broad antifungal activities by inhibiting the mitochondrial respiration chain. IliD catalyzes the Diels-Alder reaction that converts the acyclic 2-pyridone intermediate to 8-epi-ilicicolin H. The biosynthesis of ilicicolin H starts with formation of the tetramic acid by the hybrid PKS-NRPS synthetase iliA with the partnering trans-enoyl reductase iliB since iliA lacks a designated enoylreductase (ER) domain. The cytochrome P450 monooxygenase iliC then catalyzes the ring expansion of the tetramate to the acyclic 2-pyridone. The pericyclase iliD further converts the acyclic 2-pyridone into 8-epi-ilicicolin H. 8-epi-ilicicolin H might then spontaneously convert to ilicicolin H since ilicicolin H is produced in the absence of the epimerase iliE, in contrast to what was observed for the Talaromyces variabilis ilicolin H biosynthetic pathway. The protein is S-adenosyl-L-methionine-dependent Diels-Alderase iliD of Neonectria sp. (strain DH2).